A 131-amino-acid polypeptide reads, in one-letter code: Biogenesis of lysosome-related organelles complex 1 subunit CNL1 (131 aa).

Positions 1 to 29 (MSAPDSNSGHAHDSAQNEGAAEGTRDPFG) are disordered. The stretch at 73–101 (DAIDINIEEMRRILQKCEELETHFDMLDQ) forms a coiled coil.

This sequence belongs to the BLOC1S4 family. Component of the biogenesis of lysosome-related organelles complex-1 (BLOC-1).

Its subcellular location is the cytoplasm. Component of the biogenesis of lysosome-related organelles complex-1 (BLOC-1), a complex that is involved in endosomal cargo sorting. In Lachancea thermotolerans (strain ATCC 56472 / CBS 6340 / NRRL Y-8284) (Yeast), this protein is Biogenesis of lysosome-related organelles complex 1 subunit CNL1 (CLN1).